A 483-amino-acid chain; its full sequence is PAT complex subunit CCDC47 (483 aa).

The N-terminal stretch at 1–20 (MKAFHTFCVVLLVFGSVSEA) is a signal peptide. Topologically, residues 21-135 (KFDDFEDEED…PAHLQNSWES (115 aa)) are cytoplasmic. The tract at residues 46 to 118 (MEDSVTESPQ…PDTSSSKNKD (73 aa)) is disordered. The segment covering 60–104 (TEDDEDETTVELEGQDENQEGDFEDADTQEGDTESEPYDDEEFEG) has biased composition (acidic residues). A compositionally biased stretch (basic and acidic residues) spans 105–118 (YEDKPDTSSSKNKD). Residues 136–155 (YYLEILMVTGLLAYIMNYII) traverse the membrane as a helical segment. Residues 156 to 483 (GKNKNSRLAQ…KMKQIKVKAM (328 aa)) lie on the Lumenal side of the membrane. Asn178 carries N-linked (GlcNAc...) asparagine glycosylation. The disordered stretch occupies residues 424–483 (QRQEAAQSRREEKKRAEKERIMNEEDPEKQRRLEEAALRRDQKKLEKKQMKMKQIKVKAM). Residues 430-472 (QSRREEKKRAEKERIMNEEDPEKQRRLEEAALRRDQKKLEKKQ) are compositionally biased toward basic and acidic residues. Positions 451–481 (EKQRRLEEAALRRDQKKLEKKQMKMKQIKVK) form a coiled coil. Positions 473–483 (MKMKQIKVKAM) are enriched in basic residues.

This sequence belongs to the CCDC47 family. In terms of assembly, component of the PAT complex, composed of WDR83OS/Asterix and CCDC47. The PAT complex is part of the multi-pass translocon (MPT) complex, composed of three subcomplexes, the GEL complex (composed of RAB5IF/OPTI and TMCO1), the BOS complex (composed of NCLN/Nicalin, NOMO1 and TMEM147) and the PAT complex (composed of WDR83OS/Asterix and CCDC47). The MPT complex associates with the SEC61 complex. Interacts with VCP, HSPA5, DERL1, DERL2 and SELENOS.

Its subcellular location is the endoplasmic reticulum membrane. The protein resides in the rough endoplasmic reticulum membrane. Functionally, component of the multi-pass translocon (MPT) complex that mediates insertion of multi-pass membrane proteins into the lipid bilayer of membranes. The MPT complex takes over after the SEC61 complex: following membrane insertion of the first few transmembrane segments of proteins by the SEC61 complex, the MPT complex occludes the lateral gate of the SEC61 complex to promote insertion of subsequent transmembrane regions. Within the MPT complex, the PAT subcomplex sequesters any highly polar regions in the transmembrane domains away from the non-polar membrane environment until they can be buried in the interior of the fully assembled protein. Within the PAT subcomplex, CCDC47 occludes the lateral gate of the SEC61 complex. Involved in the regulation of calcium ion homeostasis in the ER. Required for proper protein degradation via the ERAD (ER-associated degradation) pathway. Has an essential role in the maintenance of ER organization during embryogenesis. The protein is PAT complex subunit CCDC47 (CCDC47) of Pongo abelii (Sumatran orangutan).